Reading from the N-terminus, the 307-residue chain is N-acetylmuramic acid 6-phosphate etherase 2 (307 aa).

In terms of domain architecture, SIS spans 62 to 225; the sequence is ITAAFKQGGR…TTASMIRLGK (164 aa). The active-site Proton donor is E90. The active site involves E121.

It belongs to the GCKR-like family. MurNAc-6-P etherase subfamily. Homodimer.

It catalyses the reaction N-acetyl-D-muramate 6-phosphate + H2O = N-acetyl-D-glucosamine 6-phosphate + (R)-lactate. The protein operates within amino-sugar metabolism; 1,6-anhydro-N-acetylmuramate degradation. Its pathway is amino-sugar metabolism; N-acetylmuramate degradation. It functions in the pathway cell wall biogenesis; peptidoglycan recycling. Functionally, specifically catalyzes the cleavage of the D-lactyl ether substituent of MurNAc 6-phosphate, producing GlcNAc 6-phosphate and D-lactate. Together with AnmK, is also required for the utilization of anhydro-N-acetylmuramic acid (anhMurNAc) either imported from the medium or derived from its own cell wall murein, and thus plays a role in cell wall recycling. The protein is N-acetylmuramic acid 6-phosphate etherase 2 of Vibrio cholerae serotype O1 (strain ATCC 39315 / El Tor Inaba N16961).